Reading from the N-terminus, the 118-residue chain is uncharacterized protein (118 aa).

The N-terminal stretch at 1–18 is a signal peptide; the sequence is MSKLIFLFVVATLATIKA. N-linked (GlcNAc...) asparagine; by host glycosylation occurs at asparagine 24.

This is an uncharacterized protein from Magallana gigas (Pacific oyster).